The primary structure comprises 39 residues: Photosystem II reaction center protein L (39 aa).

Residues 18-38 traverse the membrane as a helical segment; it reads ILYWGLLLIFVLAVLFSNYFF.

Belongs to the PsbL family. PSII is composed of 1 copy each of membrane proteins PsbA, PsbB, PsbC, PsbD, PsbE, PsbF, PsbH, PsbI, PsbJ, PsbK, PsbL, PsbM, PsbT, PsbX, PsbY, PsbZ, Psb30/Ycf12, at least 3 peripheral proteins of the oxygen-evolving complex and a large number of cofactors. It forms dimeric complexes.

It localises to the plastid membrane. In terms of biological role, one of the components of the core complex of photosystem II (PSII). PSII is a light-driven water:plastoquinone oxidoreductase that uses light energy to abstract electrons from H(2)O, generating O(2) and a proton gradient subsequently used for ATP formation. It consists of a core antenna complex that captures photons, and an electron transfer chain that converts photonic excitation into a charge separation. This subunit is found at the monomer-monomer interface and is required for correct PSII assembly and/or dimerization. In Cuscuta pentagona (Five-angled dodder), this protein is Photosystem II reaction center protein L.